Here is a 539-residue protein sequence, read N- to C-terminus: Glucans biosynthesis protein D (539 aa).

A signal peptide (tat-type signal) is located at residues 1-29; it reads MNRRNLLKASMALAAYGSVSASGLYAARA.

It belongs to the OpgD/OpgG family. In terms of processing, predicted to be exported by the Tat system. The position of the signal peptide cleavage has not been experimentally proven.

The protein resides in the periplasm. Its pathway is glycan metabolism; osmoregulated periplasmic glucan (OPG) biosynthesis. Its function is as follows. Probably involved in the control of the structural glucose backbone of osmoregulated periplasmic glucans (OPGs). The polypeptide is Glucans biosynthesis protein D (Pseudomonas savastanoi pv. phaseolicola (strain 1448A / Race 6) (Pseudomonas syringae pv. phaseolicola (strain 1448A / Race 6))).